The chain runs to 1187 residues: Myelin transcription factor 1-like protein (1187 aa).

The interval 1–20 is disordered; sequence MDVDAEEKRHRTRSKGVRVP. The CCHHC-type 1 zinc-finger motif lies at 22 to 65; the sequence is EPAIQELFSCPTPGCDGSGHVSGKYARHRSVYGCPLAKKRKTQD. Cysteine 31, cysteine 36, histidine 49, and cysteine 55 together coordinate Zn(2+). Disordered regions lie at residues 56 to 178 and 221 to 248; these read PLAK…QMSC and RTESEMNSNTSNSLEDDSDKNENLGRKS. Residues 89 to 172 show a composition bias toward acidic residues; it reads ECYESDGTED…EEEEEEEENE (84 aa). Serine 251 carries the phosphoserine modification. 2 disordered regions span residues 343-422 and 450-509; these read SETN…DRSE and REKM…PTPG. Over residues 344–358 the composition is skewed to polar residues; it reads ETNPQDRSQPPNMSV. 3 stretches are compositionally biased toward basic and acidic residues: residues 362–377, 401–412, and 450–504; these read VRQEDDFPGRTPDRSY, AKEDGCHERDDD, and REKM…RESK. 2 CCHHC-type zinc fingers span residues 496-539 and 540-583; these read SRTE…PPEI and LAMH…KLAK. Positions 505, 510, 523, 529, 549, 554, 567, and 573 each coordinate Zn(2+). The tract at residues 684–708 is disordered; the sequence is ASPSSSTTSSYAPSSSSNLSCGGGS. CCHHC-type zinc fingers lie at residues 895-938, 944-987, and 997-1040; these read LATS…GIRI, DKED…QKDG, and KSVK…MKKA. 12 residues coordinate Zn(2+): cysteine 904, cysteine 909, histidine 922, cysteine 928, cysteine 953, cysteine 958, histidine 971, cysteine 977, cysteine 1006, cysteine 1011, histidine 1024, and cysteine 1030. A coiled-coil region spans residues 1055–1131; that stretch reads SNGIENDEEI…LANLSQSLIH (77 aa).

Belongs to the MYT1 family. Interacts with SIN3B. As to expression, brain, testis and pituitary gland. Expression is higher in the brain than in the testis and pituitary gland. Highest level expression seen in the developing CNS.

The protein localises to the nucleus. It localises to the chromosome. Its function is as follows. Transcription factor that plays a key role in neuronal differentiation. Acts by specifically repressing expression of non-neuronal genes during neuron differentiation. In contrast to other transcription repressors that inhibit specific lineages, mediates repression of multiple differentiation programs. Also represses expression of negative regulators of neurogenesis, such as members of the Notch signaling pathway, including HES1. The combination of three transcription factors, ASCL1, POU3F2/BRN2 and MYT1L, is sufficient to reprogram fibroblasts and other somatic cells into induced neuronal (iN) cells in vitro. Directly binds the 5'-AAGTT-3' core motif present on the promoter of target genes and represses transcription by recruiting a multiprotein complex containing SIN3B. The 5'-AAGTT-3' core motif is absent from the promoter of neural genes. The sequence is that of Myelin transcription factor 1-like protein (Myt1l) from Rattus norvegicus (Rat).